We begin with the raw amino-acid sequence, 335 residues long: Biotin synthase (335 aa).

The 229-residue stretch at 46–274 (YDIQLASLFS…ESKIRLSAGR (229 aa)) folds into the Radical SAM core domain. 3 residues coordinate [4Fe-4S] cluster: cysteine 61, cysteine 65, and cysteine 68. [2Fe-2S] cluster is bound by residues cysteine 105, cysteine 137, cysteine 197, and arginine 269.

It belongs to the radical SAM superfamily. Biotin synthase family. Homodimer. It depends on [4Fe-4S] cluster as a cofactor. The cofactor is [2Fe-2S] cluster.

The enzyme catalyses (4R,5S)-dethiobiotin + (sulfur carrier)-SH + 2 reduced [2Fe-2S]-[ferredoxin] + 2 S-adenosyl-L-methionine = (sulfur carrier)-H + biotin + 2 5'-deoxyadenosine + 2 L-methionine + 2 oxidized [2Fe-2S]-[ferredoxin]. It participates in cofactor biosynthesis; biotin biosynthesis; biotin from 7,8-diaminononanoate: step 2/2. Its function is as follows. Catalyzes the conversion of dethiobiotin (DTB) to biotin by the insertion of a sulfur atom into dethiobiotin via a radical-based mechanism. This Prochlorococcus marinus (strain MIT 9301) protein is Biotin synthase.